Consider the following 145-residue polypeptide: Large ribosomal subunit protein uL11 (145 aa).

The protein belongs to the universal ribosomal protein uL11 family. Part of the ribosomal stalk of the 50S ribosomal subunit. Interacts with L10 and the large rRNA to form the base of the stalk. L10 forms an elongated spine to which L12 dimers bind in a sequential fashion forming a multimeric L10(L12)X complex. Post-translationally, one or more lysine residues are methylated.

In terms of biological role, forms part of the ribosomal stalk which helps the ribosome interact with GTP-bound translation factors. The chain is Large ribosomal subunit protein uL11 from Hydrogenobaculum sp. (strain Y04AAS1).